A 369-amino-acid chain; its full sequence is Peptide chain release factor 1 (369 aa).

Q234 carries the post-translational modification N5-methylglutamine.

Belongs to the prokaryotic/mitochondrial release factor family. In terms of processing, methylated by PrmC. Methylation increases the termination efficiency of RF1.

The protein resides in the cytoplasm. In terms of biological role, peptide chain release factor 1 directs the termination of translation in response to the peptide chain termination codons UAG and UAA. This chain is Peptide chain release factor 1, found in Kocuria rhizophila (strain ATCC 9341 / DSM 348 / NBRC 103217 / DC2201).